We begin with the raw amino-acid sequence, 102 residues long: Putative septation protein SpoVG 2 (102 aa).

Belongs to the SpoVG family.

Its function is as follows. Could be involved in septation. In Listeria innocua serovar 6a (strain ATCC BAA-680 / CLIP 11262), this protein is Putative septation protein SpoVG 2.